A 121-amino-acid polypeptide reads, in one-letter code: Perlustrin-like protein (121 aa).

The first 23 residues, 1–23 (MKFGVGFLLSCLVALNTVQNMLA), serve as a signal peptide directing secretion. In terms of domain architecture, IGFBP N-terminal spans 24–104 (LSCLPCDFDT…FDFKGTCQES (81 aa)). 6 disulfide bridges follow: Cys-26–Cys-52, Cys-29–Cys-54, Cys-36–Cys-55, Cys-45–Cys-58, Cys-66–Cys-79, and Cys-73–Cys-101. 3 N-linked (GlcNAc...) asparagine glycosylation sites follow: Asn-68, Asn-81, and Asn-117.

As to expression, component of the acid-insoluble organic matrix of calcified layers of the shell (at protein level).

Its subcellular location is the secreted. This Lottia gigantea (Giant owl limpet) protein is Perlustrin-like protein.